The primary structure comprises 604 residues: Glutamine--fructose-6-phosphate aminotransferase [isomerizing] (604 aa).

Cys-2 serves as the catalytic Nucleophile; for GATase activity. The region spanning 2–218 is the Glutamine amidotransferase type-2 domain; it reads CGIVGVVGNT…DKELVIVKKD (217 aa). 2 consecutive SIS domains span residues 284–423 and 456–594; these read IIKS…ANGK and VEQL…VDKP. The active-site For Fru-6P isomerization activity is the Lys-599.

Homodimer.

The protein resides in the cytoplasm. It carries out the reaction D-fructose 6-phosphate + L-glutamine = D-glucosamine 6-phosphate + L-glutamate. Catalyzes the first step in hexosamine metabolism, converting fructose-6P into glucosamine-6P using glutamine as a nitrogen source. The chain is Glutamine--fructose-6-phosphate aminotransferase [isomerizing] from Streptococcus agalactiae serotype V (strain ATCC BAA-611 / 2603 V/R).